The chain runs to 668 residues: Probable 6-phosphofructo-2-kinase PB17E12.14c (668 aa).

Residues 1–14 (MSNNNNKDDSELQS) show a composition bias toward basic and acidic residues. Disordered regions lie at residues 1–105 (MSNN…GSRP) and 136–185 (HRVP…EATN). Polar residues-rich tracts occupy residues 46–56 (NDHSFTNTDSV), 65–86 (SPVSTLTSNSANFSDSSLQNSP), and 164–184 (SSMSIPGQTSIVSSNNGSEAT). Residue 197-204 (GLPARGKS) coordinates ATP. Residues Asp-281 and Cys-312 contribute to the active site. A beta-D-fructose 6-phosphate-binding site is contributed by Arg-346. Glu-540 is an active-site residue. His-608 (proton donor) is an active-site residue.

It carries out the reaction beta-D-fructose 6-phosphate + ATP = beta-D-fructose 2,6-bisphosphate + ADP + H(+). Functionally, synthesis of fructose 2,6-bisphosphate. In Schizosaccharomyces pombe (strain 972 / ATCC 24843) (Fission yeast), this protein is Probable 6-phosphofructo-2-kinase PB17E12.14c.